The following is a 958-amino-acid chain: Coiled-coil domain-containing protein 80 (958 aa).

Positions 1 to 21 are cleaved as a signal peptide; that stretch reads MNWMPALSLALLWTAWLVCGS. Disordered stretches follow at residues 30-99, 290-335, 358-396, 424-452, and 467-617; these read RGSH…TRTR, VVED…TVRK, TATR…TTTE, ANRR…RYES, and ASMS…QPPR. A compositionally biased stretch (low complexity) spans 358 to 389; the sequence is TATRATTRTVTTASRPTTTTTPLPTTQRTWTT. 2 stretches are compositionally biased toward basic and acidic residues: residues 425–438 and 471–487; these read NRRD…EKHL and RFKD…HRDL. Basic residues predominate over residues 495–506; that stretch reads KPTKTKPPKKKT. 2 stretches are compositionally biased toward basic and acidic residues: residues 547-589 and 597-606; these read KKHE…DKDR and SRTENEDFPK.

The protein belongs to the CCDC80 family. In terms of assembly, binds to various extracellular matrix proteins.

It localises to the secreted. Its subcellular location is the extracellular space. The protein resides in the extracellular matrix. In terms of biological role, promotes cell adhesion and matrix assembly. May play a role in eye formation. This chain is Coiled-coil domain-containing protein 80 (CCDC80), found in Gallus gallus (Chicken).